The following is a 437-amino-acid chain: Selenocysteine lyase (437 aa).

Residue methionine 1 is modified to N-acetylmethionine. The tract at residues 1 to 30 (MEAAGARNRDARSRAEKSPPESRKVYMDYN) is disordered. Residues 7 to 26 (RNRDARSRAEKSPPESRKVY) are compositionally biased toward basic and acidic residues. Position 252 is an N6-(pyridoxal phosphate)lysine (lysine 252). Residue cysteine 380 is the S-selanylcysteine intermediate of the active site.

The protein belongs to the class-V pyridoxal-phosphate-dependent aminotransferase family. In terms of assembly, homodimer. Pyridoxal 5'-phosphate serves as cofactor.

The protein resides in the cytoplasm. It is found in the cytosol. It carries out the reaction L-selenocysteine + AH2 = hydrogenselenide + L-alanine + A + H(+). Its function is as follows. Catalyzes the decomposition of L-selenocysteine to L-alanine and elemental selenium. This chain is Selenocysteine lyase (SCLY), found in Bos taurus (Bovine).